A 313-amino-acid polypeptide reads, in one-letter code: tRNA(Ile)-lysidine synthase (313 aa).

Position 37-42 (37-42) interacts with ATP; that stretch reads SGGPDS.

Belongs to the tRNA(Ile)-lysidine synthase family.

It is found in the cytoplasm. The enzyme catalyses cytidine(34) in tRNA(Ile2) + L-lysine + ATP = lysidine(34) in tRNA(Ile2) + AMP + diphosphate + H(+). Functionally, ligates lysine onto the cytidine present at position 34 of the AUA codon-specific tRNA(Ile) that contains the anticodon CAU, in an ATP-dependent manner. Cytidine is converted to lysidine, thus changing the amino acid specificity of the tRNA from methionine to isoleucine. In Corynebacterium efficiens (strain DSM 44549 / YS-314 / AJ 12310 / JCM 11189 / NBRC 100395), this protein is tRNA(Ile)-lysidine synthase.